Here is a 261-residue protein sequence, read N- to C-terminus: Imidazole glycerol phosphate synthase subunit HisF (261 aa).

Residues D16 and D135 contribute to the active site.

Belongs to the HisA/HisF family. As to quaternary structure, heterodimer of HisH and HisF.

The protein resides in the cytoplasm. The catalysed reaction is 5-[(5-phospho-1-deoxy-D-ribulos-1-ylimino)methylamino]-1-(5-phospho-beta-D-ribosyl)imidazole-4-carboxamide + L-glutamine = D-erythro-1-(imidazol-4-yl)glycerol 3-phosphate + 5-amino-1-(5-phospho-beta-D-ribosyl)imidazole-4-carboxamide + L-glutamate + H(+). Its pathway is amino-acid biosynthesis; L-histidine biosynthesis; L-histidine from 5-phospho-alpha-D-ribose 1-diphosphate: step 5/9. IGPS catalyzes the conversion of PRFAR and glutamine to IGP, AICAR and glutamate. The HisF subunit catalyzes the cyclization activity that produces IGP and AICAR from PRFAR using the ammonia provided by the HisH subunit. This chain is Imidazole glycerol phosphate synthase subunit HisF, found in Mycobacterium leprae (strain Br4923).